A 412-amino-acid chain; its full sequence is Glutamyl-tRNA reductase (412 aa).

Substrate contacts are provided by residues threonine 52–arginine 55, serine 108, glutamate 113–glutamate 115, and glutamine 119. Cysteine 53 acts as the Nucleophile in catalysis. Glycine 189 to glycine 194 contributes to the NADP(+) binding site.

This sequence belongs to the glutamyl-tRNA reductase family. As to quaternary structure, homodimer.

It catalyses the reaction (S)-4-amino-5-oxopentanoate + tRNA(Glu) + NADP(+) = L-glutamyl-tRNA(Glu) + NADPH + H(+). It functions in the pathway porphyrin-containing compound metabolism; protoporphyrin-IX biosynthesis; 5-aminolevulinate from L-glutamyl-tRNA(Glu): step 1/2. Catalyzes the NADPH-dependent reduction of glutamyl-tRNA(Glu) to glutamate 1-semialdehyde (GSA). This is Glutamyl-tRNA reductase from Sulfurisphaera tokodaii (strain DSM 16993 / JCM 10545 / NBRC 100140 / 7) (Sulfolobus tokodaii).